We begin with the raw amino-acid sequence, 242 residues long: Phosphoribosylaminoimidazole-succinocarboxamide synthase (242 aa).

Belongs to the SAICAR synthetase family.

The enzyme catalyses 5-amino-1-(5-phospho-D-ribosyl)imidazole-4-carboxylate + L-aspartate + ATP = (2S)-2-[5-amino-1-(5-phospho-beta-D-ribosyl)imidazole-4-carboxamido]succinate + ADP + phosphate + 2 H(+). It functions in the pathway purine metabolism; IMP biosynthesis via de novo pathway; 5-amino-1-(5-phospho-D-ribosyl)imidazole-4-carboxamide from 5-amino-1-(5-phospho-D-ribosyl)imidazole-4-carboxylate: step 1/2. The chain is Phosphoribosylaminoimidazole-succinocarboxamide synthase from Pediococcus pentosaceus (strain ATCC 25745 / CCUG 21536 / LMG 10740 / 183-1w).